Here is a 659-residue protein sequence, read N- to C-terminus: UvrABC system protein B (659 aa).

The Helicase ATP-binding domain maps to 25 to 414; the sequence is EGVRRGAREQ…PSLVVEQIVR (390 aa). Position 38–45 (38–45) interacts with ATP; sequence GATGTGKT. The short motif at 91–114 is the Beta-hairpin element; sequence YYDYYQPEAYIPTTDTYIEKDALI. The region spanning 431-597 is the Helicase C-terminal domain; sequence QIDDLYAEIR…TIVKPVRDVI (167 aa). The UVR domain occupies 620-655; that stretch reads PKVVAKLRKEMMQAAKDLDFERAAEIRDIIFELEKK.

It belongs to the UvrB family. Forms a heterotetramer with UvrA during the search for lesions. Interacts with UvrC in an incision complex.

The protein localises to the cytoplasm. In terms of biological role, the UvrABC repair system catalyzes the recognition and processing of DNA lesions. A damage recognition complex composed of 2 UvrA and 2 UvrB subunits scans DNA for abnormalities. Upon binding of the UvrA(2)B(2) complex to a putative damaged site, the DNA wraps around one UvrB monomer. DNA wrap is dependent on ATP binding by UvrB and probably causes local melting of the DNA helix, facilitating insertion of UvrB beta-hairpin between the DNA strands. Then UvrB probes one DNA strand for the presence of a lesion. If a lesion is found the UvrA subunits dissociate and the UvrB-DNA preincision complex is formed. This complex is subsequently bound by UvrC and the second UvrB is released. If no lesion is found, the DNA wraps around the other UvrB subunit that will check the other stand for damage. The polypeptide is UvrABC system protein B (Symbiobacterium thermophilum (strain DSM 24528 / JCM 14929 / IAM 14863 / T)).